Reading from the N-terminus, the 191-residue chain is NADH-quinone oxidoreductase subunit B (191 aa).

Positions 70, 71, 135, and 165 each coordinate [4Fe-4S] cluster.

Belongs to the complex I 20 kDa subunit family. As to quaternary structure, NDH-1 is composed of 14 different subunits. Subunits NuoB, C, D, E, F, and G constitute the peripheral sector of the complex. [4Fe-4S] cluster is required as a cofactor.

The protein resides in the cell inner membrane. The enzyme catalyses a quinone + NADH + 5 H(+)(in) = a quinol + NAD(+) + 4 H(+)(out). Its function is as follows. NDH-1 shuttles electrons from NADH, via FMN and iron-sulfur (Fe-S) centers, to quinones in the respiratory chain. The immediate electron acceptor for the enzyme in this species is believed to be ubiquinone. Couples the redox reaction to proton translocation (for every two electrons transferred, four hydrogen ions are translocated across the cytoplasmic membrane), and thus conserves the redox energy in a proton gradient. The polypeptide is NADH-quinone oxidoreductase subunit B (Parvibaculum lavamentivorans (strain DS-1 / DSM 13023 / NCIMB 13966)).